The chain runs to 79 residues: Sec-independent protein translocase protein TatA (79 aa).

A helical membrane pass occupies residues 1–21; sequence MGGFTSIWHWVIVLLVIVLLF. The segment at 46–79 is disordered; it reads DDEEEAKNEPKTLDAQATQTKVHETSEIKSKQES. A compositionally biased stretch (basic and acidic residues) spans 66–79; it reads KVHETSEIKSKQES.

This sequence belongs to the TatA/E family. As to quaternary structure, the Tat system comprises two distinct complexes: a TatABC complex, containing multiple copies of TatA, TatB and TatC subunits, and a separate TatA complex, containing only TatA subunits. Substrates initially bind to the TatABC complex, which probably triggers association of the separate TatA complex to form the active translocon.

The protein resides in the cell inner membrane. Functionally, part of the twin-arginine translocation (Tat) system that transports large folded proteins containing a characteristic twin-arginine motif in their signal peptide across membranes. TatA could form the protein-conducting channel of the Tat system. This is Sec-independent protein translocase protein TatA from Helicobacter pylori (strain HPAG1).